A 151-amino-acid chain; its full sequence is Succinate dehydrogenase subunit 4, mitochondrial (151 aa).

The N-terminal 78 residues, 1–78, are a transit peptide targeting the mitochondrion; sequence MSLRRTILDL…RSISSSIGQS (78 aa). H109 serves as a coordination point for heme. An a ubiquinone-binding site is contributed by Y121. Residues 130–150 form a helical membrane-spanning segment; the sequence is LIVMSLGLFQIIVLKDIILFL.

In terms of assembly, component of complex II composed of eight subunits in plants: four classical SDH subunits SDH1, SDH2, SDH3 and SDH4 (a flavoprotein (FP), an iron-sulfur protein (IP), and a cytochrome b composed of a large and a small subunit.), as well as four subunits unknown in mitochondria from bacteria and heterotrophic eukaryotes. Heme serves as cofactor. Expressed in flowers, inflorescences and stems.

Its subcellular location is the mitochondrion inner membrane. It participates in carbohydrate metabolism; tricarboxylic acid cycle. Functionally, membrane-anchoring subunit of succinate dehydrogenase (SDH). The polypeptide is Succinate dehydrogenase subunit 4, mitochondrial (Arabidopsis thaliana (Mouse-ear cress)).